A 350-amino-acid chain; its full sequence is Small ribosomal subunit biogenesis GTPase RsgA (350 aa).

The interval 1–30 (MSKRKLTQNQQRRIQSNNAKTLHRHQHRHK) is disordered. A compositionally biased stretch (polar residues) spans 7 to 20 (TQNQQRRIQSNNAK). Over residues 21–30 (TLHRHQHRHK) the composition is skewed to basic residues. The CP-type G domain occupies 106–274 (HNQIVRPDYY…LIDSPGIREF (169 aa)). Residues 162-165 (NKAD) and 216-224 (GQSGVGKSS) contribute to the GTP site. Cysteine 298, cysteine 303, histidine 305, and cysteine 311 together coordinate Zn(2+).

Belongs to the TRAFAC class YlqF/YawG GTPase family. RsgA subfamily. Monomer. Associates with 30S ribosomal subunit, binds 16S rRNA. The cofactor is Zn(2+).

The protein resides in the cytoplasm. Functionally, one of several proteins that assist in the late maturation steps of the functional core of the 30S ribosomal subunit. Helps release RbfA from mature subunits. May play a role in the assembly of ribosomal proteins into the subunit. Circularly permuted GTPase that catalyzes slow GTP hydrolysis, GTPase activity is stimulated by the 30S ribosomal subunit. The protein is Small ribosomal subunit biogenesis GTPase RsgA of Histophilus somni (strain 129Pt) (Haemophilus somnus).